We begin with the raw amino-acid sequence, 214 residues long: Putative archaetidylserine decarboxylase proenzyme (214 aa).

Ser180 serves as the catalytic Schiff-base intermediate with substrate; via pyruvic acid. Pyruvic acid (Ser); by autocatalysis is present on Ser180.

It belongs to the phosphatidylserine decarboxylase family. PSD-A subfamily. As to quaternary structure, heterodimer of a large membrane-associated beta subunit and a small pyruvoyl-containing alpha subunit. The cofactor is pyruvate. In terms of processing, is synthesized initially as an inactive proenzyme. Formation of the active enzyme involves a self-maturation process in which the active site pyruvoyl group is generated from an internal serine residue via an autocatalytic post-translational modification. Two non-identical subunits are generated from the proenzyme in this reaction, and the pyruvate is formed at the N-terminus of the alpha chain, which is derived from the carboxyl end of the proenzyme. The post-translation cleavage follows an unusual pathway, termed non-hydrolytic serinolysis, in which the side chain hydroxyl group of the serine supplies its oxygen atom to form the C-terminus of the beta chain, while the remainder of the serine residue undergoes an oxidative deamination to produce ammonia and the pyruvoyl prosthetic group on the alpha chain.

It localises to the cell membrane. The enzyme catalyses archaetidylserine + H(+) = archaetidylethanolamine + CO2. Its function is as follows. Catalyzes the formation of archaetidylethanolamine (PtdEtn) from archaetidylserine (PtdSer). This chain is Putative archaetidylserine decarboxylase proenzyme, found in Methanopyrus kandleri (strain AV19 / DSM 6324 / JCM 9639 / NBRC 100938).